Reading from the N-terminus, the 363-residue chain is tRNA N6-adenosine threonylcarbamoyltransferase (363 aa).

Fe cation is bound by residues His121 and His125. Substrate-binding positions include 143 to 147 (LASGG), Asp176, Gly189, and Asn287. Asp315 lines the Fe cation pocket.

The protein belongs to the KAE1 / TsaD family. Fe(2+) serves as cofactor.

The protein localises to the cytoplasm. It catalyses the reaction L-threonylcarbamoyladenylate + adenosine(37) in tRNA = N(6)-L-threonylcarbamoyladenosine(37) in tRNA + AMP + H(+). Required for the formation of a threonylcarbamoyl group on adenosine at position 37 (t(6)A37) in tRNAs that read codons beginning with adenine. Is involved in the transfer of the threonylcarbamoyl moiety of threonylcarbamoyl-AMP (TC-AMP) to the N6 group of A37, together with TsaE and TsaB. TsaD likely plays a direct catalytic role in this reaction. The polypeptide is tRNA N6-adenosine threonylcarbamoyltransferase (Rhodopseudomonas palustris (strain TIE-1)).